A 243-amino-acid polypeptide reads, in one-letter code: Ubiquinone/menaquinone biosynthesis C-methyltransferase UbiE (243 aa).

S-adenosyl-L-methionine is bound by residues Thr-69, Asp-90, and 116 to 117 (DA).

This sequence belongs to the class I-like SAM-binding methyltransferase superfamily. MenG/UbiE family.

The enzyme catalyses a 2-demethylmenaquinol + S-adenosyl-L-methionine = a menaquinol + S-adenosyl-L-homocysteine + H(+). It carries out the reaction a 2-methoxy-6-(all-trans-polyprenyl)benzene-1,4-diol + S-adenosyl-L-methionine = a 5-methoxy-2-methyl-3-(all-trans-polyprenyl)benzene-1,4-diol + S-adenosyl-L-homocysteine + H(+). The protein operates within quinol/quinone metabolism; menaquinone biosynthesis; menaquinol from 1,4-dihydroxy-2-naphthoate: step 2/2. Its pathway is cofactor biosynthesis; ubiquinone biosynthesis. Functionally, methyltransferase required for the conversion of demethylmenaquinol (DMKH2) to menaquinol (MKH2) and the conversion of 2-polyprenyl-6-methoxy-1,4-benzoquinol (DDMQH2) to 2-polyprenyl-3-methyl-6-methoxy-1,4-benzoquinol (DMQH2). This Burkholderia ambifaria (strain MC40-6) protein is Ubiquinone/menaquinone biosynthesis C-methyltransferase UbiE.